The following is a 294-amino-acid chain: 4-diphosphocytidyl-2-C-methyl-D-erythritol kinase (294 aa).

Residue K23 is part of the active site. P106–S116 serves as a coordination point for ATP. Residue D148 is part of the active site.

This sequence belongs to the GHMP kinase family. IspE subfamily.

It catalyses the reaction 4-CDP-2-C-methyl-D-erythritol + ATP = 4-CDP-2-C-methyl-D-erythritol 2-phosphate + ADP + H(+). Its pathway is isoprenoid biosynthesis; isopentenyl diphosphate biosynthesis via DXP pathway; isopentenyl diphosphate from 1-deoxy-D-xylulose 5-phosphate: step 3/6. Catalyzes the phosphorylation of the position 2 hydroxy group of 4-diphosphocytidyl-2C-methyl-D-erythritol. The sequence is that of 4-diphosphocytidyl-2-C-methyl-D-erythritol kinase from Nitrosospira multiformis (strain ATCC 25196 / NCIMB 11849 / C 71).